Reading from the N-terminus, the 694-residue chain is Elongation factor G (694 aa).

The region spanning 9-288 (DAIRNIGIMA…VIVKWLPSPL (280 aa)) is the tr-type G domain. Residues 18–25 (AHIDAGKT), 82–86 (DTPGH), and 136–139 (NKMD) contribute to the GTP site.

This sequence belongs to the TRAFAC class translation factor GTPase superfamily. Classic translation factor GTPase family. EF-G/EF-2 subfamily.

Its subcellular location is the cytoplasm. Catalyzes the GTP-dependent ribosomal translocation step during translation elongation. During this step, the ribosome changes from the pre-translocational (PRE) to the post-translocational (POST) state as the newly formed A-site-bound peptidyl-tRNA and P-site-bound deacylated tRNA move to the P and E sites, respectively. Catalyzes the coordinated movement of the two tRNA molecules, the mRNA and conformational changes in the ribosome. The polypeptide is Elongation factor G (fusA) (Chlamydia muridarum (strain MoPn / Nigg)).